Reading from the N-terminus, the 328-residue chain is Zinc chaperone YeiR (328 aa).

9-17 (GFLGSGKTT) serves as a coordination point for GTP. The CXCC motif motif lies at 63–66 (CMCC). Residue Asp-155 participates in GTP binding. Residues 241–321 (CGWIFDADTV…WNALQSALLK (81 aa)) enclose the CobW C-terminal domain.

The protein belongs to the SIMIBI class G3E GTPase family. ZNG1 subfamily. As to quaternary structure, oligomerizes in the presence of Zn(2+).

It catalyses the reaction GTP + H2O = GDP + phosphate + H(+). With respect to regulation, GTPase activity is enhanced by Zn(2+) binding. Its function is as follows. Zinc chaperone that directly transfers zinc cofactor to target proteins, thereby activating them. Zinc is transferred from the CXCC motif in the GTPase domain to the zinc binding site in target proteins in a process requiring GTP hydrolysis. In Escherichia coli (strain K12), this protein is Zinc chaperone YeiR (yeiR).